Consider the following 230-residue polypeptide: 7-cyano-7-deazaguanine synthase (230 aa).

Residue 9 to 19 (LSGGLDSATTA) coordinates ATP. Residues Cys-190, Cys-198, Cys-201, and Cys-204 each coordinate Zn(2+).

The protein belongs to the QueC family. Zn(2+) serves as cofactor.

It carries out the reaction 7-carboxy-7-deazaguanine + NH4(+) + ATP = 7-cyano-7-deazaguanine + ADP + phosphate + H2O + H(+). Its pathway is purine metabolism; 7-cyano-7-deazaguanine biosynthesis. In terms of biological role, catalyzes the ATP-dependent conversion of 7-carboxy-7-deazaguanine (CDG) to 7-cyano-7-deazaguanine (preQ(0)). This Microcystis aeruginosa (strain NIES-843 / IAM M-2473) protein is 7-cyano-7-deazaguanine synthase.